The primary structure comprises 497 residues: 4,4'-diaponeurosporene oxygenase (497 aa).

7–19 (VIGGGLGGISAAI) lines the FAD pocket.

The protein belongs to the carotenoid/retinoid oxidoreductase family. CrtP subfamily. It depends on FAD as a cofactor.

It carries out the reaction all-trans-4,4'-diaponeurosporene + 2 AH2 + 2 O2 = 4,4'-diaponeurosporenal + 2 A + 3 H2O. The protein operates within carotenoid biosynthesis; staphyloxanthin biosynthesis; staphyloxanthin from farnesyl diphosphate: step 3/5. Its function is as follows. Involved in the biosynthesis of the yellow-orange carotenoid staphyloxanthin, which plays a role in the virulence via its protective function against oxidative stress. Catalyzes the oxidation of the terminal methyl side group of 4,4'-diaponeurosporene to form 4,4'-diaponeurosporen-4-al. The C40 carotenoid lycopene is a poor substrate. The sequence is that of 4,4'-diaponeurosporene oxygenase from Staphylococcus aureus (strain Mu50 / ATCC 700699).